The sequence spans 119 residues: Ribonuclease P protein component (119 aa).

It belongs to the RnpA family. As to quaternary structure, consists of a catalytic RNA component (M1 or rnpB) and a protein subunit.

The catalysed reaction is Endonucleolytic cleavage of RNA, removing 5'-extranucleotides from tRNA precursor.. RNaseP catalyzes the removal of the 5'-leader sequence from pre-tRNA to produce the mature 5'-terminus. It can also cleave other RNA substrates such as 4.5S RNA. The protein component plays an auxiliary but essential role in vivo by binding to the 5'-leader sequence and broadening the substrate specificity of the ribozyme. This Streptococcus gordonii (strain Challis / ATCC 35105 / BCRC 15272 / CH1 / DL1 / V288) protein is Ribonuclease P protein component.